The chain runs to 348 residues: Putative [LysW]-L-2-aminoadipate/[LysW]-L-glutamate phosphate reductase (348 aa).

NADP(+) is bound at residue 9-12; sequence SGYV. Cys149 is an active-site residue. Residue Asn315 coordinates NADP(+).

This sequence belongs to the NAGSA dehydrogenase family. Type 1 subfamily. LysY sub-subfamily.

It localises to the cytoplasm. It catalyses the reaction [amino-group carrier protein]-C-terminal-N-(1-carboxy-5-oxopentan-1-yl)-L-glutamine + phosphate + NADP(+) = [amino-group carrier protein]-C-terminal-N-(1-carboxy-5-phosphooxy-5-oxopentan-1-yl)-L-glutamine + NADPH + H(+). The enzyme catalyses [amino-group carrier protein]-C-terminal-gamma-(L-glutamyl-5-semialdehyde)-L-glutamate + phosphate + NADP(+) = [amino-group carrier protein]-C-terminal-gamma-(5-phospho-L-glutamyl)-L-glutamate + NADPH + H(+). Its pathway is amino-acid biosynthesis; L-lysine biosynthesis via AAA pathway; L-lysine from L-alpha-aminoadipate (Thermus route): step 3/5. It functions in the pathway amino-acid biosynthesis; L-arginine biosynthesis. Functionally, involved in both the arginine and lysine biosynthetic pathways. In Cenarchaeum symbiosum (strain A), this protein is Putative [LysW]-L-2-aminoadipate/[LysW]-L-glutamate phosphate reductase.